A 122-amino-acid chain; its full sequence is Large ribosomal subunit protein bL12 (122 aa).

This sequence belongs to the bacterial ribosomal protein bL12 family. As to quaternary structure, homodimer. Part of the ribosomal stalk of the 50S ribosomal subunit. Forms a multimeric L10(L12)X complex, where L10 forms an elongated spine to which 2 to 4 L12 dimers bind in a sequential fashion. Binds GTP-bound translation factors.

Its function is as follows. Forms part of the ribosomal stalk which helps the ribosome interact with GTP-bound translation factors. Is thus essential for accurate translation. In Pasteurella multocida (strain Pm70), this protein is Large ribosomal subunit protein bL12.